A 358-amino-acid chain; its full sequence is Phenylalanine--tRNA ligase alpha subunit (358 aa).

Glu258 provides a ligand contact to Mg(2+).

It belongs to the class-II aminoacyl-tRNA synthetase family. Phe-tRNA synthetase alpha subunit type 1 subfamily. As to quaternary structure, tetramer of two alpha and two beta subunits. Mg(2+) is required as a cofactor.

The protein localises to the cytoplasm. It catalyses the reaction tRNA(Phe) + L-phenylalanine + ATP = L-phenylalanyl-tRNA(Phe) + AMP + diphosphate + H(+). The protein is Phenylalanine--tRNA ligase alpha subunit of Rhodospirillum centenum (strain ATCC 51521 / SW).